Reading from the N-terminus, the 220-residue chain is MOB kinase activator-like 3 (220 aa).

Zn(2+) contacts are provided by Cys-83, Cys-88, His-165, and His-170.

The protein belongs to the MOB1/phocein family.

The chain is MOB kinase activator-like 3 (Mob3) from Drosophila melanogaster (Fruit fly).